The following is a 183-amino-acid chain: Pyruvoyl-dependent arginine decarboxylase (183 aa).

Residue S44 is modified to Pyruvic acid (Ser).

This sequence belongs to the PdaD family. Pyruvate is required as a cofactor.

The enzyme catalyses L-arginine + H(+) = agmatine + CO2. The sequence is that of Pyruvoyl-dependent arginine decarboxylase from Nitrosopumilus maritimus (strain SCM1).